Consider the following 64-residue polypeptide: Beta sliding clamp (64 aa).

It belongs to the beta sliding clamp family. Forms a ring-shaped head-to-tail homodimer around DNA which binds and tethers DNA polymerases and other proteins to the DNA. The DNA replisome complex has a single clamp-loading complex (3 tau and 1 each of delta, delta', psi and chi subunits) which binds 3 Pol III cores (1 core on the leading strand and 2 on the lagging strand) each with a beta sliding clamp dimer. Additional proteins in the replisome are other copies of gamma, psi and chi, Ssb, DNA helicase and RNA primase.

It localises to the cytoplasm. Functionally, confers DNA tethering and processivity to DNA polymerases and other proteins. Acts as a clamp, forming a ring around DNA (a reaction catalyzed by the clamp-loading complex) which diffuses in an ATP-independent manner freely and bidirectionally along dsDNA. Initially characterized for its ability to contact the catalytic subunit of DNA polymerase III (Pol III), a complex, multichain enzyme responsible for most of the replicative synthesis in bacteria; Pol III exhibits 3'-5' exonuclease proofreading activity. The beta chain is required for initiation of replication as well as for processivity of DNA replication. The chain is Beta sliding clamp (dnaN) from Actinobacillus pleuropneumoniae (Haemophilus pleuropneumoniae).